The following is a 1101-amino-acid chain: Protein unc-13 homolog (1101 aa).

An MHD1 domain is found at 663–804; it reads VSVFPAADSL…ASKDDLVPPV (142 aa). The region spanning 941–1051 is the MHD2 domain; it reads QSRLEGLIEA…YETRELIDDL (111 aa).

Belongs to the unc-13 family. As to expression, expressed in roots, cotyledons, leaves, stems and flowers. Expressed in guard cells and mesophyll cells of leaves.

The protein localises to the cytoplasm. It is found in the cell membrane. In terms of biological role, controls the tethering of the proton ATPase AHA1 to the plasma membrane. Is essential for stomatal opening in response to low concentration of carbon dioxide and light. The protein is Protein unc-13 homolog of Arabidopsis thaliana (Mouse-ear cress).